The following is a 379-amino-acid chain: Transaminase htyB (379 aa).

A pyridoxal 5'-phosphate-binding site is contributed by arginine 92. Lysine 203 carries the post-translational modification N6-(pyridoxal phosphate)lysine. Glutamate 239 is a binding site for pyridoxal 5'-phosphate.

It belongs to the class-IV pyridoxal-phosphate-dependent aminotransferase family. Pyridoxal 5'-phosphate is required as a cofactor.

It participates in antifungal biosynthesis. Transaminase; part of the gene cluster that mediates the de novo generation of L-homotyrosine from acetyl-CoA and 4-hydroxyphenyl-pyruvate. L-homotyrosine is a building block of echinocandin B, a fungal lipidated cyclic hexapeptide that acts as an antifungal agent. L-homotyrosine 4-hydroxyphenyl-pyruvate first undergoes an aldol-type condensation by htyA with the C-2 of acetyl-CoA followed by the release of CoA to form 2-(4-hydroxybenzyl)-malate. This is followed by isomerization of 2-(4-hydroxy-benzyl)-malate to 3-(4-hydroxybenzyl)-malate by htyD. Thereafter, 3-(4-hydroxybenzyl)-malate undergoes decarboxylation and oxidation to form 2-oxo-4-(4-hydroxybenzyl)butanoic acid, coupled to reduction of NAD(+) to NADH by htyC. The product then undergoes transamination catalyzed by htyB to form L-homotyrosine. The polypeptide is Transaminase htyB (Aspergillus rugulosus (Emericella rugulosa)).